A 417-amino-acid chain; its full sequence is MLPNTGKLAGCTLFITGASRGIGKAIALKAARDGANIVVAAKTAEAHPKLPGTIYTAASEIEAAGGKALPCIVDVRDENQISAAVEKAVDAFGGIDILVNNASAISLTNTLETSMKKVDLMMGINTRGTYLTSKICIPYLKKSKVAHILNLSPPLNLNPMWFKNHCAYTIAKYGMSMCALGMSEEYKGEIAVNALWPKTAIHTAAMDMLGGSGVDKQCRKPDIMADAAYAILTKTKDFTGNFVIDEELLQQEGIKDLDVYAISPGHPLLPDFFLDESPETLASAMEEHGATAAFKAGKKQAKSQDASPLQETFKAIERSVNEEAVKSTQGIYQFVLSGEESGNWFLDLKNDKGGVGKGEPSTKADVVMSMDSGDFIKMFAGKMKPTMAFMSGKLKIKGDMGLALKLEKILGQMNAKL.

Residues 17-23 (GASRGIG), Lys42, and Asp74 contribute to the NADP(+) site. Tyr168 acts as the Proton acceptor in catalysis. Lys172 contacts NADP(+). The SCP2 domain maps to 306-414 (ASPLQETFKA…KLEKILGQMN (109 aa)).

The protein belongs to the short-chain dehydrogenases/reductases (SDR) family.

It localises to the peroxisome. Its subcellular location is the mitochondrion. In terms of biological role, has apparently no steroid dehydrogenase activity. Might act as a metabolic regulator that affects systemic adaptation to nutritional cues. This Xenopus laevis (African clawed frog) protein is Hydroxysteroid dehydrogenase-like protein 2 (hsdl2).